The primary structure comprises 344 residues: tRNA N6-adenosine threonylcarbamoyltransferase (344 aa).

Fe cation is bound by residues His-119 and His-123. Residues 141 to 145, Asp-174, Gly-187, Asp-191, and Asn-280 contribute to the substrate site; that span reads VVSGG. Fe cation is bound at residue Asp-310.

The protein belongs to the KAE1 / TsaD family. Requires Fe(2+) as cofactor.

It localises to the cytoplasm. It carries out the reaction L-threonylcarbamoyladenylate + adenosine(37) in tRNA = N(6)-L-threonylcarbamoyladenosine(37) in tRNA + AMP + H(+). Functionally, required for the formation of a threonylcarbamoyl group on adenosine at position 37 (t(6)A37) in tRNAs that read codons beginning with adenine. Is involved in the transfer of the threonylcarbamoyl moiety of threonylcarbamoyl-AMP (TC-AMP) to the N6 group of A37, together with TsaE and TsaB. TsaD likely plays a direct catalytic role in this reaction. The protein is tRNA N6-adenosine threonylcarbamoyltransferase of Listeria monocytogenes serovar 1/2a (strain ATCC BAA-679 / EGD-e).